The sequence spans 322 residues: MDSVLSGKIVQILVGYLKENIYSEQMIKLRMKRICSYEEFLPTYSLIERITEESKEIAIKVYEKNIIVEIVKDFKNKDLIELFELKEELFDEALSYLKKYNADKFLESYTLYCFSEYSDPDSFIKENKSILTKLLRNQYEEVPEEYINELLKSKIKYSTKDLIILDWDNGIILDKNEDFWEEVDIIELACIRVLNLRVFDSMLSEAIQYFTRLQWEKLGYFKLKKLSKDLYLQRISYISYFDSIENVLMLYGDRYYAELYERLCKIFYVSEWIKRVEKKMEMISDIYTMTRQHLTEFYGLLLEGTIVALILLEIILALAKIV.

The chain crosses the membrane as a helical span at residues 299-319 (GLLLEGTIVALILLEIILALA).

It localises to the membrane. This is an uncharacterized protein from Methanocaldococcus jannaschii (strain ATCC 43067 / DSM 2661 / JAL-1 / JCM 10045 / NBRC 100440) (Methanococcus jannaschii).